Here is a 224-residue protein sequence, read N- to C-terminus: MDQFIKQDETGDLIETGMNVANHFLSAPIQGTNSLSKASIIPGVAPVLIGNPEQKNIQHPTASHQGSKSKGSGSGVRSIIVPPSEAGNGGTQDPEPLFAQTGQGGIVTTVYQDPTIQPTGSSRSVELAKIGKERMINRFVEKPRISTPVTEFKRGAGSGCSRPDNPRGGHRREWSLSWVQGEVRVFEWCNPICSPITAAARFHSCKCGNCPAKCDQCERDYGPP.

The span at 54–65 shows a compositional bias: polar residues; sequence QKNIQHPTASHQ. Disordered stretches follow at residues 54–96 and 150–171; these read QKNI…DPEP and TEFK…GGHR. Zn(2+) is bound by residues H170, C189, C193, C205, C207, C210, C214, and C217.

This sequence belongs to the paramyxoviruses V protein family. Interacts with host IFIH1/MDA5 and DHX58/LGP2. Forms with host DDB1, CUL4A, STAT1, STAT2 and STAT3 the mumps virus V-dependent complex (VDC).

The protein resides in the virion. It is found in the host cytoplasm. Plays an essential role in the inhibition of host immune response. Prevents the establishment of cellular antiviral state by blocking interferon-alpha/beta (IFN-alpha/beta) production and signaling pathway. Interacts with host IFIH1/MDA5 and DHX58/LGP2 to inhibit the transduction pathway involved in the activation of IFN-beta promoter, thus protecting the virus against cell antiviral state. Blocks the type I and II interferon signaling pathways by interacting with host STAT1, STAT2 and STAT3, and mediating their ubiquitination and subsequent proteasomal degradation. This chain is Non-structural protein V, found in Mumps virus (strain SBL) (MuV).